The sequence spans 1620 residues: ABC-type organic anion transporter ABCA8B (1620 aa).

Transmembrane regions (helical) follow at residues 30–50, 223–243, 267–287, 298–318, 326–346, 352–372, and 396–416; these read SLMEWVSSLLLLLFLYWYPHG, FFIFTCIISFSPITYYVSINV, SWGLLYAGFVFIMALSLALVI, FMVVFSLFLLYGLSMITLAFL, SVLTGLSVFLLTIFWGSLGFT, LPAPVEWTLSLFSPFAFTLGM, and LIIATNFMLVFDAFLYLALMM. Positions 479–714 constitute an ABC transporter 1 domain; that stretch reads IRIRNISKEY…WGVGYHLSLQ (236 aa). 515–522 provides a ligand contact to ATP; the sequence is GHSGAGKS. Asparagine 723 carries an N-linked (GlcNAc...) asparagine glycan. Helical transmembrane passes span 860–880, 979–999, 1023–1043, 1069–1089, 1105–1125, 1135–1155, 1164–1184, and 1194–1214; these read TLLSVLLILVVGICPFLFENI, CFPVLMDILSNGLLGMVKPSA, TAFWLILTSACPPYIAMSSVT, MVDIPLYCFVFLFMSLMDYLF, IPCSVGYAISLIFLTYVISFI, IWSLSFYIITVFSVAVILLAF, IIFLIPPSTLVGCLILSLHLF, and VIEPFLVFLIPFLHVFIFIFT. The ABC transporter 2 domain maps to 1283–1516; that stretch reads LRKEYAGKQK…FGKDYLLEMK (234 aa). 1321–1328 lines the ATP pocket; the sequence is GHNGAGKS.

Belongs to the ABC transporter superfamily. ABCA family. In terms of tissue distribution, expressed in heart, brain, lung, liver and skeletal muscle. Highly expressed in the liver, and is also abundant in heart and skeletal muscle. Highly expressed in liver.

The protein resides in the cell membrane. It localises to the basolateral cell membrane. The catalysed reaction is taurocholate(in) + ATP + H2O = taurocholate(out) + ADP + phosphate + H(+). The enzyme catalyses cholesterol(in) + ATP + H2O = cholesterol(out) + ADP + phosphate + H(+). Its activity is regulated as follows. Cholesterol efflux is increased by extracellularly applied taurocholate. In terms of biological role, mediates cholesterol and taurocholate efflux. Through the interaction with ABCA1 potentiates the cholesterol efflux to lipid-free APOA1, in turn regulates high-density lipoprotein cholesterol levels. The sequence is that of ABC-type organic anion transporter ABCA8B from Mus musculus (Mouse).